Reading from the N-terminus, the 369-residue chain is Aspartate beta-hydroxylase domain-containing protein 2 (369 aa).

The Cytoplasmic portion of the chain corresponds to 1-58 (MVWAPLGPPRTDCLTLLHTPSKDSPKMSLEWLVAWSWSLDGLRDCIATGIQSVRDCDT). Residues 59-79 (TAVITVACLLVLFVWYCYHVG) traverse the membrane as a helical segment. Topologically, residues 80-369 (REQPRPYVSV…ALDFIFAPGR (290 aa)) are lumenal. N-linked (GlcNAc...) asparagine glycosylation occurs at Asn-211. Residues Trp-228 and Ser-272 each coordinate 2-oxoglutarate. His-283 provides a ligand contact to Fe cation. 292 to 294 (RCH) provides a ligand contact to 2-oxoglutarate. His-328 is a binding site for Fe cation. Position 341 (Arg-341) interacts with 2-oxoglutarate.

Belongs to the aspartyl/asparaginyl beta-hydroxylase family. Fe cation is required as a cofactor.

It localises to the membrane. May function as 2-oxoglutarate-dependent dioxygenase. This chain is Aspartate beta-hydroxylase domain-containing protein 2 (ASPHD2), found in Homo sapiens (Human).